The following is a 409-amino-acid chain: MARAKFERTKPHVNVGTIGHVDHGKTTLTAAITTTLAALGQATAKRYDEIDAAPEEKARGITINTAHVEYQTANRHYAHVDCPGHADYVKNMITGAAQMDGAILVVSAADGPMPQTREHILLARQVGVPSLVVFLNKADMVDDPELLELVELEVRELLSKYDFPGDDVPIIRGSALKALERMTANPKTQRGEDPWVDKIYELMDAVDSYIPTPERDVDKPFLMAVEDVFSITGRGTVATGRIERGRIKVGETVELVGLRETRSTTVTGLEMFQKTLDEGIAGDNVGVLLRGIQKNEVERGMVLAKPKTITPHTNFESEVYVLKKEEGGRHTPFFAGYRPQFYVRTTDVTGTISSFTADDGSQPEMVMPGDRVKMTVELIQPIAIEQGMRFAIREGGRTVGAGVVSKILK.

Positions 10–214 constitute a tr-type G domain; it reads KPHVNVGTIG…AVDSYIPTPE (205 aa). The interval 19–26 is G1; sequence GHVDHGKT. 19 to 26 contributes to the GTP binding site; it reads GHVDHGKT. Thr26 provides a ligand contact to Mg(2+). A G2 region spans residues 60–64; it reads GITIN. Residues 81–84 are G3; sequence DCPG. GTP contacts are provided by residues 81–85 and 136–139; these read DCPGH and NKAD. Residues 136–139 are G4; that stretch reads NKAD. Positions 174–176 are G5; the sequence is SAL.

This sequence belongs to the TRAFAC class translation factor GTPase superfamily. Classic translation factor GTPase family. EF-Tu/EF-1A subfamily. As to quaternary structure, monomer.

The protein localises to the cytoplasm. The enzyme catalyses GTP + H2O = GDP + phosphate + H(+). Its function is as follows. GTP hydrolase that promotes the GTP-dependent binding of aminoacyl-tRNA to the A-site of ribosomes during protein biosynthesis. The polypeptide is Elongation factor Tu (Synechococcus sp. (strain JA-2-3B'a(2-13)) (Cyanobacteria bacterium Yellowstone B-Prime)).